A 677-amino-acid chain; its full sequence is METSSSRSVQVDDWQKNYSVVASSICTPKQKADAYRALLLHIQDAYANSEISQVFATNLFKRYTEKYSAIIDSDNVVTGLNNYAESIFALAGSQQADSDKWQSGLSINNVFKMSTVQEMMQAGQKFKESLLEPADASVVMCKEPTIFEVPQLGVCGGSEEADLLSSSVHGTEKTQAIPGNSLRCSPFQSTLFPMATNTKTCLTSSAPSGESTTATFHRTPLFGNTKKEPQSFPKTSTGLNMFLSNPSCVPSGCENPRERKAFNDSDTINMLSNPTLNKAPSKTEDSGQREDNSLPTFKTAKEQLWADQKKRSHQSQHTSKSFNGAIKKSLGAGRSRGIFGKFVPPVSNKQDGSEQNGNVKPKSSRAGSAEPAHLTDDRLKNVEPRMVELIMNEIMDHGPPVHWEDIAGVEFAKATIKEIVVWPMMRPDIFTGLRGPPKGILLFGPPGTGKTLIGKCIASQSGATFFSISASSLTSKWVGEGEKMVRALFAVARCQQPAVIFIDEIDSLLSQRGDGEHESSRRIKTEFLVQLDGATTSSEDRILVVGATNRPQEIDEAARRRLVKRLYIPLPEASARKQIVVNLMSKEQCCLTDEETELVVQQSDGFSGADMTQLCREASLGPIRSLHTADIATISPDQVRPIAYIDFENAFRTVRPSVSPKDLELYENWNKTFGCGK.

Over residues threonine 203–phenylalanine 216 the composition is skewed to polar residues. 3 disordered regions span residues threonine 203–phenylalanine 232, valine 249–glycine 324, and glycine 337–arginine 378. Lysine 226 participates in a covalent cross-link: Glycyl lysine isopeptide (Lys-Gly) (interchain with G-Cter in SUMO2). The segment covering aspartate 264–proline 280 has biased composition (polar residues). A compositionally biased stretch (basic and acidic residues) spans serine 281–asparagine 292. An N6-acetyllysine modification is found at lysine 341. Polar residues predominate over residues serine 347–asparagine 358. ATP-binding positions include alanine 407 and glycine 447–leucine 452.

Belongs to the AAA ATPase family. Hexamer. Interacts (via N-terminal one-half region) with RAD51; the interaction is direct. Interacts (via N-terminal one-half region) with SPIDR (via the C-terminal region); the interaction is direct. Interacts with FIRRM; may regulate homologous recombination. Mg(2+) is required as a cofactor.

It is found in the nucleus. It localises to the cytoplasm. The protein localises to the perinuclear region. It carries out the reaction ATP + H2O = ADP + phosphate + H(+). Involved in DNA double-strand break (DBS) repair via homologous recombination (HR). Recruited at DSB sites independently of BRCA2, RAD51 and RAD51 paralogs in a H2AX-dependent manner. May regulate osteoblast proliferation and differentiation. May play a role in the control of male meiosis dynamic. This Rattus norvegicus (Rat) protein is Fidgetin-like protein 1 (Fignl1).